The following is a 171-amino-acid chain: Endoribonuclease YbeY (171 aa).

3 residues coordinate Zn(2+): His130, His134, and His140.

Belongs to the endoribonuclease YbeY family. Requires Zn(2+) as cofactor.

Its subcellular location is the cytoplasm. Functionally, single strand-specific metallo-endoribonuclease involved in late-stage 70S ribosome quality control and in maturation of the 3' terminus of the 16S rRNA. This is Endoribonuclease YbeY from Neisseria meningitidis serogroup C / serotype 2a (strain ATCC 700532 / DSM 15464 / FAM18).